Reading from the N-terminus, the 253-residue chain is 5'-nucleotidase SurE (253 aa).

A divalent metal cation-binding residues include D8, D9, S40, and N93.

Belongs to the SurE nucleotidase family. Requires a divalent metal cation as cofactor.

It localises to the cytoplasm. The enzyme catalyses a ribonucleoside 5'-phosphate + H2O = a ribonucleoside + phosphate. In terms of biological role, nucleotidase that shows phosphatase activity on nucleoside 5'-monophosphates. The protein is 5'-nucleotidase SurE of Haemophilus ducreyi (strain 35000HP / ATCC 700724).